Consider the following 138-residue polypeptide: Ig heavy chain V region TEPC 1017 (138 aa).

Residues 1–20 (MGWSYIILFLVATATDVHSQ) form the signal peptide. Residues 21–49 (VQLQQPGAELVKPGASVQLSCKASGHTFT) are framework-1. Cys-41 and Cys-115 are oxidised to a cystine. Residues 50-54 (NYWIH) are complementarity-determining-1. Residues 55–68 (WVKQRPGQGLEWIG) are framework-2. The tract at residues 69 to 85 (EINPNDGRSNYNEKFKN) is complementarity-determining-2. The tract at residues 86 to 117 (KATLTVDKSSSTAYMQLSSLTPEEFAVYYCAR) is framework-3. Positions 118 to 127 (SDGYYDWFVY) are complementarity-determining-3. Positions 128 to 138 (WGQGTLVTFSA) are framework-4.

This Mus musculus (Mouse) protein is Ig heavy chain V region TEPC 1017.